A 201-amino-acid polypeptide reads, in one-letter code: Lipoprotein signal peptidase (201 aa).

The next 3 membrane-spanning stretches (helical) occupy residues 33–53 (LLLSIAAVVLTLDIVTKVLAV), 86–106 (GYTWVLTLIATGVVIGIFWMG), and 110–130 (VSSWWALGLGMILGGAMGNLV). Residues aspartate 146 and aspartate 160 contribute to the active site. The chain crosses the membrane as a helical span at residues 158-178 (VADPSVVVGAILLVVLSIFGF).

This sequence belongs to the peptidase A8 family.

The protein localises to the cell membrane. It carries out the reaction Release of signal peptides from bacterial membrane prolipoproteins. Hydrolyzes -Xaa-Yaa-Zaa-|-(S,diacylglyceryl)Cys-, in which Xaa is hydrophobic (preferably Leu), and Yaa (Ala or Ser) and Zaa (Gly or Ala) have small, neutral side chains.. It functions in the pathway protein modification; lipoprotein biosynthesis (signal peptide cleavage). This protein specifically catalyzes the removal of signal peptides from prolipoproteins. The chain is Lipoprotein signal peptidase from Mycobacterium leprae (strain Br4923).